Reading from the N-terminus, the 53-residue chain is Large ribosomal subunit protein bL33A (53 aa).

This sequence belongs to the bacterial ribosomal protein bL33 family.

This chain is Large ribosomal subunit protein bL33A (rpmG1), found in Mycoplasma genitalium (strain ATCC 33530 / DSM 19775 / NCTC 10195 / G37) (Mycoplasmoides genitalium).